The chain runs to 217 residues: MKFFIDTANVEEIKKANDMGVICGVTTNPSLIAKEGRDFKEVITEITNIVDGPISGEVKATTEDAESMIKEGREIAKIHPNMVVKIPMTVEGLKATKVLSQEGIKTNVTLVFSANQALLAARAGATYVSPFLGRLDDISTPGIDLIRTISDIFEIYNLPTEIIAASVRNPVHITDCALAGAHIATVPYSVIVQCTKHPLTDAGIEKFKADYRAVFGE.

Residue lysine 85 is the Schiff-base intermediate with substrate of the active site.

Belongs to the transaldolase family. Type 3B subfamily.

It is found in the cytoplasm. It carries out the reaction D-sedoheptulose 7-phosphate + D-glyceraldehyde 3-phosphate = D-erythrose 4-phosphate + beta-D-fructose 6-phosphate. The protein operates within carbohydrate degradation; pentose phosphate pathway; D-glyceraldehyde 3-phosphate and beta-D-fructose 6-phosphate from D-ribose 5-phosphate and D-xylulose 5-phosphate (non-oxidative stage): step 2/3. In terms of biological role, transaldolase is important for the balance of metabolites in the pentose-phosphate pathway. This is Probable transaldolase from Lachnoclostridium phytofermentans (strain ATCC 700394 / DSM 18823 / ISDg) (Clostridium phytofermentans).